A 557-amino-acid polypeptide reads, in one-letter code: Protein Red (557 aa).

The tract at residues 1–90 (MPERDSEPFS…YAKLRQQEIE (90 aa)) is disordered. A compositionally biased stretch (basic and acidic residues) spans 16–25 (DGHDVDDPHS). Residues 42-53 (TPRAAPTSAPPS) are compositionally biased toward low complexity. N6-acetyllysine occurs at positions 98 and 137. Residue Lys-151 forms a Glycyl lysine isopeptide (Lys-Gly) (interchain with G-Cter in SUMO2) linkage. The tract at residues 181–205 (KEKEEEELMEKPQKETKKDEDPENK) is disordered. Residue Ser-287 is modified to Phosphoserine. Basic residues predominate over residues 294 to 303 (RNKKLKKKDK). Residues 294–402 (RNKKLKKKDK…PMDVDKGPGS (109 aa)) are disordered. Over residues 304–313 (GKLEEKKPPE) the composition is skewed to basic and acidic residues. Glycyl lysine isopeptide (Lys-Gly) (interchain with G-Cter in SUMO2) cross-links involve residues Lys-310 and Lys-331. Over residues 332–398 (TPRDKERERY…VDDEPMDVDK (67 aa)) the composition is skewed to basic and acidic residues. Tandem repeats lie at residues 342 to 343 (RE), 344 to 345 (RE), 346 to 347 (RD), 348 to 349 (RE), 350 to 351 (RD), 352 to 353 (RD), 354 to 355 (RE), 356 to 357 (RD), 358 to 359 (RE), 360 to 361 (RD), 362 to 363 (RE), 364 to 365 (RE), 366 to 367 (RE), 368 to 369 (RD), 370 to 371 (RE), 372 to 373 (RE), and 374 to 375 (RE). The segment at 342 to 375 (RERERDRERDRDRERDRERDRERERERDRERERE) is 17 X 2 AA tandem repeats of R-[ED]. Residues Lys-386, Lys-388, Lys-404, and Lys-408 each participate in a glycyl lysine isopeptide (Lys-Gly) (interchain with G-Cter in SUMO2) cross-link. Phosphoserine occurs at positions 417 and 460. Thr-485 is modified (phosphothreonine). Residues Lys-496, Lys-501, and Lys-509 each participate in a glycyl lysine isopeptide (Lys-Gly) (interchain with G-Cter in SUMO2) cross-link. The residue at position 536 (Ser-536) is a Phosphoserine. Glycyl lysine isopeptide (Lys-Gly) (interchain with G-Cter in SUMO2) cross-links involve residues Lys-541, Lys-543, Lys-544, and Lys-553.

The protein belongs to the RED family. Component of the spliceosome B complex. Interacts with SMU1. Interacts with MAD1L1. May interact with DHX15.

It is found in the nucleus. The protein resides in the nucleoplasm. The protein localises to the chromosome. Its subcellular location is the cytoplasm. It localises to the cytoskeleton. It is found in the spindle pole. In terms of biological role, involved in pre-mRNA splicing as a component of the spliceosome. Auxiliary spliceosomal protein that regulates selection of alternative splice sites in a small set of target pre-mRNA species. Required for normal mitotic cell cycle progression. Recruits MAD1L1 and MAD2L1 to kinetochores, and is required to trigger the spindle assembly checkpoint. Required for normal accumulation of SMU1. The protein is Protein Red (Ik) of Rattus norvegicus (Rat).